The primary structure comprises 312 residues: DNA-directed RNA polymerase subunit alpha (312 aa).

An alpha N-terminal domain (alpha-NTD) region spans residues 1 to 229; that stretch reads MLQYQIDRIE…ELFQPLATVT (229 aa). The interval 246–312 is alpha C-terminal domain (alpha-CTD); sequence IPLEELNLSV…ISIPQSRTSA (67 aa).

The protein belongs to the RNA polymerase alpha chain family. As to quaternary structure, in cyanobacteria the RNAP catalytic core is composed of 2 alpha, 1 beta, 1 beta', 1 gamma and 1 omega subunit. When a sigma factor is associated with the core the holoenzyme is formed, which can initiate transcription.

It carries out the reaction RNA(n) + a ribonucleoside 5'-triphosphate = RNA(n+1) + diphosphate. DNA-dependent RNA polymerase catalyzes the transcription of DNA into RNA using the four ribonucleoside triphosphates as substrates. The polypeptide is DNA-directed RNA polymerase subunit alpha (Prochlorococcus marinus (strain SARG / CCMP1375 / SS120)).